The primary structure comprises 243 residues: MIQLQKPRLILDNGLRLDGRKPDEMRPIKIELGVLKNADGSAIFEMGNTKVIAAVYGPKEMHPRHLALPDRAVLRVRYHMTPFSTDERKNPAPSRREIELSKVIREALESTILVELFPRTVIDVFMEVLQADAGTRLVSLMAASMALADAGIPMRDLIAGVAVGKADGVLVLDLNEPEDMWGEADMPVAMMPSLKQVALLQLNGNMTPQEFRQALEMAQKGIETIYNLEKEAIRSKYAELKEE.

Belongs to the RNase PH family. Rrp41 subfamily. In terms of assembly, component of the archaeal exosome complex. Forms a hexameric ring-like arrangement composed of 3 Rrp41-Rrp42 heterodimers. The hexameric ring associates with a trimer of Rrp4 and/or Csl4 subunits.

The protein resides in the cytoplasm. In terms of biological role, catalytic component of the exosome, which is a complex involved in RNA degradation. Has 3'-&gt;5' exoribonuclease activity. Can also synthesize heteromeric RNA-tails. The protein is Exosome complex component Rrp41 of Sulfurisphaera tokodaii (strain DSM 16993 / JCM 10545 / NBRC 100140 / 7) (Sulfolobus tokodaii).